The primary structure comprises 694 residues: Cyclic nucleotide-gated ion channel 4 (694 aa).

A compositionally biased stretch (basic and acidic residues) spans 1–15 (MATEQEFTRASRFSR). Residues 1–64 (MATEQEFTRA…RIGLTCGGRR (64 aa)) form a disordered region. Residues 1 to 92 (MATEQEFTRA…RSKWVREWNK (92 aa)) lie on the Cytoplasmic side of the membrane. Positions 24–53 (SEEDNTEEEDEEEEEMEEIEEEEEEEEEED) are enriched in acidic residues. The chain crosses the membrane as a helical span at residues 93 to 113 (VFLLVCATGLFVDPLFLYTLS). Residues 114–126 (VSDTCMCLLVDGW) lie on the Extracellular side of the membrane. The chain crosses the membrane as a helical span at residues 127 to 147 (LALTVTALRSMTDLLHLWNIW). At 148-187 (IQFKIARRWPYPGGDSDGDTNKGGGTRGSTRVAPPYVKKN) the chain is on the cytoplasmic side. Residues 188–208 (GFFFDLFVILPLPQVVLWVVI) traverse the membrane as a helical segment. Over 209–216 (PSLLKRGS) the chain is Extracellular. A helical membrane pass occupies residues 217-237 (VTLVVSVLLVTFLFQYLPKIY). Residues 238–251 (HSIRHLRRNATLSG) lie on the Cytoplasmic side of the membrane. The chain crosses the membrane as a helical span at residues 252–272 (YIFGTVWWGIALNMIAYFVAA). Residues 273–392 (HAAGACWYLL…LESTTEWSEV (120 aa)) are Extracellular-facing. The helical transmembrane segment at 393–413 (VFNIIVLTSGLLLVTMLIGNI) threads the bilayer. Topologically, residues 414 to 694 (KVFLHATTSK…KPNPDDFDDY (281 aa)) are cytoplasmic. A nucleoside 3',5'-cyclic phosphate-binding positions include 496–626 (LFQH…ARYY) and Asp565. The segment at 610 to 626 (FRYTFVNEKVKRSARYY) is calmodulin-binding. In terms of domain architecture, IQ spans 631–660 (RTWAAVAVQLAWRRYKHRLTLTSLSFIRPR).

The protein belongs to the cyclic nucleotide-gated cation channel (TC 1.A.1.5) family. As to quaternary structure, homotetramer or heterotetramer.

It localises to the cell membrane. Acts as a cyclic nucleotide-gated ion channel. Permeable to potassium and sodium in a cyclic nucleotide-dependent fashion (cAMP or cGMP). Might constitute a common downstream component of the signaling pathways leading to hypersensitive response (HR). The chain is Cyclic nucleotide-gated ion channel 4 (CNGC4) from Arabidopsis thaliana (Mouse-ear cress).